A 263-amino-acid chain; its full sequence is Protein TILLER ANGLE CONTROL 1 (263 aa).

Residues 55 to 61 (GILAIGT) carry the IGT motif motif. The interval 243 to 263 (GKKIHPEQLNGRSNAEGPLTA) is disordered.

The protein belongs to the TAC family. As to expression, highly expressed in leaf sheath pulvinus. Expressed in shoot apical meristem and leaves.

In terms of biological role, involved in the regulation of leaf growth angle. Promotes horizontal shoot growth. This is Protein TILLER ANGLE CONTROL 1 from Zea mays (Maize).